We begin with the raw amino-acid sequence, 195 residues long: Imidazoleglycerol-phosphate dehydratase (195 aa).

Belongs to the imidazoleglycerol-phosphate dehydratase family.

The protein localises to the cytoplasm. The enzyme catalyses D-erythro-1-(imidazol-4-yl)glycerol 3-phosphate = 3-(imidazol-4-yl)-2-oxopropyl phosphate + H2O. The protein operates within amino-acid biosynthesis; L-histidine biosynthesis; L-histidine from 5-phospho-alpha-D-ribose 1-diphosphate: step 6/9. The polypeptide is Imidazoleglycerol-phosphate dehydratase (Deinococcus radiodurans (strain ATCC 13939 / DSM 20539 / JCM 16871 / CCUG 27074 / LMG 4051 / NBRC 15346 / NCIMB 9279 / VKM B-1422 / R1)).